We begin with the raw amino-acid sequence, 382 residues long: Serine/arginine-rich splicing factor SR45a (382 aa).

4 stretches are compositionally biased toward low complexity: residues 30-45 (PMSYSRRSRYSPSLSP), 54-68 (VSRSLSRSPTRSVSS), 177-195 (PSYSPRRSVSCSRSRSRSY), and 202-219 (SYSPSYGRRGRSSSYSPF). Disordered stretches follow at residues 30 to 76 (PMSY…PGNS) and 150 to 382 (KARR…SVSP). The span at 288–316 (RARDRSCSPYYRGRDRSYSPHYQGRDRSY) shows a compositional bias: basic and acidic residues. Low complexity predominate over residues 329 to 343 (VSGSVSPGGRSMSRS). Positions 345 to 361 (SPRKGRKESRSKSRRHD) are enriched in basic residues. Low complexity predominate over residues 364 to 382 (SSMCHSRSARSSTSRSVSP).

Belongs to the splicing factor SR family. SR45 subfamily. In terms of assembly, component of the spliceosome. Homodimer. Interacts with PRP38, SCL28, SR45, RNU1 and U2AF35B. Phosphorylated. Expressed in leaves, stems and roots.

The protein resides in the nucleus speckle. Functionally, probable splicing factor involved in constitutive and/or alternative splicing events. May bridge the 5' and 3' components of the spliceosome. The polypeptide is Serine/arginine-rich splicing factor SR45a (SR45A) (Arabidopsis thaliana (Mouse-ear cress)).